The following is a 156-amino-acid chain: Probable succinate transporter subunit YjjB (156 aa).

Helical transmembrane passes span 7–27, 54–74, 86–106, and 128–148; these read WALL…AMVF, FGMN…IIGI, VFTV…TAMI, and FLKA…PGIW.

It belongs to the ThrE exporter (TC 2.A.79) family. The transporter is composed of YjjB and YjjP.

Its subcellular location is the cell inner membrane. Involved in succinate export with YjjP. Both proteins are required for export. The polypeptide is Probable succinate transporter subunit YjjB (Pectobacterium atrosepticum (strain SCRI 1043 / ATCC BAA-672) (Erwinia carotovora subsp. atroseptica)).